Reading from the N-terminus, the 213-residue chain is High frequency lysogenization protein HflD homolog (213 aa).

The protein belongs to the HflD family.

It is found in the cytoplasm. It localises to the cell inner membrane. The sequence is that of High frequency lysogenization protein HflD homolog from Alcanivorax borkumensis (strain ATCC 700651 / DSM 11573 / NCIMB 13689 / SK2).